The sequence spans 56 residues: Large ribosomal subunit protein bL32 (56 aa).

Over residues 1–16 the composition is skewed to basic residues; the sequence is MAVQKNRKTRSKRGMR. Residues 1–37 form a disordered region; the sequence is MAVQKNRKTRSKRGMRRSHDALGTATMSVDSTSGETH. Polar residues predominate over residues 25–35; the sequence is ATMSVDSTSGE.

Belongs to the bacterial ribosomal protein bL32 family.

In Pseudoalteromonas atlantica (strain T6c / ATCC BAA-1087), this protein is Large ribosomal subunit protein bL32.